The primary structure comprises 111 residues: uncharacterized protein (111 aa).

This is an uncharacterized protein from Bacillus subtilis (strain 168).